Consider the following 553-residue polypeptide: CTP synthase (553 aa).

Residues 1-277 form an amidoligase domain region; that stretch reads MPTEPETDYD…DQYVMEELDI (277 aa). Serine 26 is a binding site for CTP. A UTP-binding site is contributed by serine 26. ATP is bound by residues 27–32 and aspartate 84; that span reads GLGKGI. Residues aspartate 84 and glutamate 152 each contribute to the Mg(2+) site. CTP contacts are provided by residues 159 to 161, 198 to 203, and lysine 234; these read DIE and KTKPTQ. UTP contacts are provided by residues 198 to 203 and lysine 234; that span reads KTKPTQ. Valine 252 serves as a coordination point for ATP. The Glutamine amidotransferase type-1 domain occupies 307–544; sequence LVGKYDLEDA…LEAVLGDDPH (238 aa). Glycine 364 serves as a coordination point for L-glutamine. Residue cysteine 391 is the Nucleophile; for glutamine hydrolysis of the active site. Residues 392–395, glutamate 415, and arginine 472 contribute to the L-glutamine site; that span reads LGFQ. Residues histidine 517 and glutamate 519 contribute to the active site.

This sequence belongs to the CTP synthase family. In terms of assembly, homotetramer.

It is found in the cytoplasm. It catalyses the reaction UTP + L-glutamine + ATP + H2O = CTP + L-glutamate + ADP + phosphate + 2 H(+). It carries out the reaction L-glutamine + H2O = L-glutamate + NH4(+). The enzyme catalyses UTP + NH4(+) + ATP = CTP + ADP + phosphate + 2 H(+). Its pathway is pyrimidine metabolism; CTP biosynthesis via de novo pathway; CTP from UDP: step 2/2. Allosterically activated by GTP, when glutamine is the substrate; GTP has no effect on the reaction when ammonia is the substrate. The allosteric effector GTP functions by stabilizing the protein conformation that binds the tetrahedral intermediate(s) formed during glutamine hydrolysis. Inhibited by the product CTP, via allosteric rather than competitive inhibition. Inhibited by 6-diazo-5-oxo-l-norleucine (DON). Functionally, catalyzes the ATP-dependent amination of UTP to CTP with either L-glutamine or ammonia as the source of nitrogen. Regulates intracellular CTP levels through interactions with the four ribonucleotide triphosphates. This Haloarcula hispanica (strain ATCC 33960 / DSM 4426 / JCM 8911 / NBRC 102182 / NCIMB 2187 / VKM B-1755) protein is CTP synthase.